Reading from the N-terminus, the 497-residue chain is Pancreatic alpha-amylase (497 aa).

Pyrrolidone carboxylic acid is present on glutamine 1. 3 disulfides stabilise this stretch: cysteine 28-cysteine 86, cysteine 70-cysteine 115, and cysteine 141-cysteine 160. The Ca(2+) site is built by asparagine 100, arginine 158, and aspartate 167. Arginine 195 lines the chloride pocket. Aspartate 197 (nucleophile) is an active-site residue. Histidine 201 contacts Ca(2+). The Proton donor role is filled by glutamate 233. Residues asparagine 298 and arginine 337 each contribute to the chloride site. Cystine bridges form between cysteine 379-cysteine 385 and cysteine 451-cysteine 463.

The protein belongs to the glycosyl hydrolase 13 family. Monomer. Ca(2+) is required as a cofactor. Requires chloride as cofactor.

Its subcellular location is the secreted. The protein localises to the extracellular space. It catalyses the reaction Endohydrolysis of (1-&gt;4)-alpha-D-glucosidic linkages in polysaccharides containing three or more (1-&gt;4)-alpha-linked D-glucose units.. The chain is Pancreatic alpha-amylase from Struthio camelus (Common ostrich).